We begin with the raw amino-acid sequence, 504 residues long: Cholesterol 7-alpha-monooxygenase (504 aa).

Residue Cys-444 participates in heme binding.

It belongs to the cytochrome P450 family. Heme serves as cofactor.

Its subcellular location is the endoplasmic reticulum membrane. The protein resides in the microsome membrane. The enzyme catalyses cholesterol + reduced [NADPH--hemoprotein reductase] + O2 = 7alpha-hydroxycholesterol + oxidized [NADPH--hemoprotein reductase] + H2O + H(+). It participates in lipid metabolism; bile acid biosynthesis. Functionally, catalyzes a rate-limiting step in cholesterol catabolism and bile acid biosynthesis by introducing a hydrophilic moiety at position 7 of cholesterol. Important for cholesterol homeostasis. This is Cholesterol 7-alpha-monooxygenase (CYP7A1) from Cricetulus griseus (Chinese hamster).